The chain runs to 664 residues: Macrolide export ATP-binding/permease protein MacB (664 aa).

The ABC transporter domain occupies 8–245; that stretch reads LELVDVHRTY…AGPSVPLTLD (238 aa). An ATP-binding site is contributed by 44–51; sequence GSSGSGKS. Transmembrane regions (helical) follow at residues 283–303, 543–563, 602–622, and 627–647; these read LLSVLGILVGVASVIAMMALG, GAIAAISLLVGGIGIMNIMLV, IIGIIAGIGISALLAVFAGWA, and IVSIVLATFFSAITGIFFGLW.

It belongs to the ABC transporter superfamily. Macrolide exporter (TC 3.A.1.122) family. In terms of assembly, homodimer.

The protein resides in the cell inner membrane. Its function is as follows. Non-canonical ABC transporter that contains transmembrane domains (TMD), which form a pore in the inner membrane, and an ATP-binding domain (NBD), which is responsible for energy generation. Confers resistance against macrolides. This Chlorobium luteolum (strain DSM 273 / BCRC 81028 / 2530) (Pelodictyon luteolum) protein is Macrolide export ATP-binding/permease protein MacB.